The sequence spans 101 residues: NAD(P)H-quinone oxidoreductase subunit 4L, chloroplastic (101 aa).

The next 3 helical transmembrane spans lie at 2-22 (MLEH…YGLI), 32-52 (MCLE…SDFF), and 61-81 (IFSI…PAIV).

Belongs to the complex I subunit 4L family. As to quaternary structure, NDH is composed of at least 16 different subunits, 5 of which are encoded in the nucleus.

Its subcellular location is the plastid. It is found in the chloroplast thylakoid membrane. The catalysed reaction is a plastoquinone + NADH + (n+1) H(+)(in) = a plastoquinol + NAD(+) + n H(+)(out). It carries out the reaction a plastoquinone + NADPH + (n+1) H(+)(in) = a plastoquinol + NADP(+) + n H(+)(out). NDH shuttles electrons from NAD(P)H:plastoquinone, via FMN and iron-sulfur (Fe-S) centers, to quinones in the photosynthetic chain and possibly in a chloroplast respiratory chain. The immediate electron acceptor for the enzyme in this species is believed to be plastoquinone. Couples the redox reaction to proton translocation, and thus conserves the redox energy in a proton gradient. This chain is NAD(P)H-quinone oxidoreductase subunit 4L, chloroplastic, found in Fagopyrum esculentum subsp. ancestrale (Wild buckwheat).